We begin with the raw amino-acid sequence, 474 residues long: 1-aminocyclopropane-1-carboxylate synthase 4 (474 aa).

Substrate contacts are provided by Glu-47 and Tyr-85. Lys-273 is modified (N6-(pyridoxal phosphate)lysine).

Belongs to the class-I pyridoxal-phosphate-dependent aminotransferase family. As to quaternary structure, homodimer and heterodimer. In vivo, the relevance of heterodimerization with other ACS enzymes is however unsure. Interacts with XBAT32. Interacts (via its C-terminal region) with ETO1 and EOL1. Pyridoxal 5'-phosphate is required as a cofactor. Ubiquitinated by XBAT32. Ubiquitination probably leads to its subsequent degradation, thus controlling ethylene production. As to expression, expressed in roots, leaves and flowers.

It catalyses the reaction S-adenosyl-L-methionine = 1-aminocyclopropane-1-carboxylate + S-methyl-5'-thioadenosine + H(+). The protein operates within alkene biosynthesis; ethylene biosynthesis via S-adenosyl-L-methionine; ethylene from S-adenosyl-L-methionine: step 1/2. In terms of biological role, 1-aminocyclopropane-1-carboxylate synthase (ACS) enzymes catalyze the conversion of S-adenosyl-L-methionine (SAM) into 1-aminocyclopropane-1-carboxylate (ACC), a direct precursor of ethylene. This Arabidopsis thaliana (Mouse-ear cress) protein is 1-aminocyclopropane-1-carboxylate synthase 4 (ACS4).